We begin with the raw amino-acid sequence, 441 residues long: Endoglucanase E-2 (441 aa).

The tat-type signal signal peptide spans 1–31; sequence MSPRPLRALLGAAAAALVSAAALAFPSQAAA. Positions 32 to 320 are catalytic; the sequence is NDSPFYVNPN…YEMAIAAGGT (289 aa). Asp-110 is a catalytic residue. Intrachain disulfides connect Cys-111–Cys-156 and Cys-263–Cys-298. The active-site Proton donor is Asp-148. Asp-296 acts as the Nucleophile in catalysis. Positions 317–343 are disordered; that stretch reads AGGTNPNPNPNPTPTPTPTPTPPPGSS. The tract at residues 321 to 340 is linker; that stretch reads NPNPNPNPTPTPTPTPTPPP. Residues 323-341 show a composition bias toward pro residues; that stretch reads NPNPNPTPTPTPTPTPPPG. The region spanning 339-441 is the CBM2 domain; it reads PPGSSGACTA…SVPTLTCAAS (103 aa). Cys-346 and Cys-438 are joined by a disulfide.

The protein belongs to the glycosyl hydrolase 6 (cellulase B) family. Homodimer. Post-translationally, predicted to be exported by the Tat system. The position of the signal peptide cleavage has been experimentally proven.

The enzyme catalyses Endohydrolysis of (1-&gt;4)-beta-D-glucosidic linkages in cellulose, lichenin and cereal beta-D-glucans.. The protein operates within glycan metabolism; cellulose degradation. The protein is Endoglucanase E-2 (celB) of Thermobifida fusca (Thermomonospora fusca).